The chain runs to 305 residues: Translation initiation factor eIF2B subunit alpha (305 aa).

The residue at position 2 (S2) is an N-acetylserine. T291 carries the post-translational modification Phosphothreonine.

The protein belongs to the eIF-2B alpha/beta/delta subunits family. As to quaternary structure, component of the translation initiation factor 2B (eIF2B) complex which is a heterodecamer of two sets of five different subunits: alpha, beta, gamma, delta and epsilon. Subunits alpha, beta and delta comprise a regulatory subcomplex and subunits epsilon and gamma comprise a catalytic subcomplex. Within the complex, the hexameric regulatory complex resides at the center, with the two heterodimeric catalytic subcomplexes bound on opposite sides.

The protein localises to the cytoplasm. It localises to the cytosol. Functionally, acts as a component of the translation initiation factor 2B (eIF2B) complex, which catalyzes the exchange of GDP for GTP on the eukaryotic initiation factor 2 (eIF2) complex gamma subunit. Its guanine nucleotide exchange factor activity is repressed when bound to eIF2 complex phosphorylated on the alpha subunit, thereby limiting the amount of methionyl-initiator methionine tRNA available to the ribosome and consequently global translation is repressed. It activates the translation of GCN4 in response to low amino acid, carbon, or purine availability, by suppressing the inhibitory effects of multiple uORFs present in the leader of GCN4 mRNA. It may promote either repression or activation of GCN4 expression depending on amino acid availability. Modulation of GCN3 regulatory function in response to amino acid availability occurs post-translationally. The sequence is that of Translation initiation factor eIF2B subunit alpha from Saccharomyces cerevisiae (strain ATCC 204508 / S288c) (Baker's yeast).